Consider the following 413-residue polypeptide: MTLTISDLPRDLKKKIFSRIPLRYVRALRLTCKEWETLIKSRSLKIDEEESQMVALMDYNLCLMSKSFNGGDPSTEIKGKLTCFDEQVKVSMLFHCEGLLLCILKDDNTKVVVWNPYLGQRRFIQVRFSHIPGGWDQFSYALGYYKNNNMMKSFKLLRFFDYFYTSNDFVFYEIYDFDSGLWKTLDVTPYWRIRFFDDIGVSLKGNTYWCAKERKPEWNADPFIIVDHIICFDFTSERFGPLVPLPFRAMKESLVTLSCVREEKLAALFCRDVVVEVWITTTIEFDKVSWSKFLTFGVRDCPMIYSCTGSFFIDEVNKVAVIFGQPLKRDKVFIIGEAGQVRDVDLGEPAHQDSWLYVCPYVPSLVKIKQPPGCKRRRQSSSENRRYKRNMMRLVELEKYHIAMEPKRGDKTI.

Residues 2-53 (TLTISDLPRDLKKKIFSRIPLRYVRALRLTCKEWETLIKSRSLKIDEEESQM) enclose the F-box domain. 2 Kelch repeats span residues 156–202 (LLRF…IGVS) and 331–379 (KVFI…RRRQ).

This is Putative F-box/kelch-repeat protein At3g22870 from Arabidopsis thaliana (Mouse-ear cress).